The sequence spans 186 residues: Probable chorismate pyruvate-lyase (186 aa).

Substrate-binding residues include Arg77, Leu115, and Glu174.

Belongs to the UbiC family.

The protein localises to the cytoplasm. It catalyses the reaction chorismate = 4-hydroxybenzoate + pyruvate. It functions in the pathway cofactor biosynthesis; ubiquinone biosynthesis. Its function is as follows. Removes the pyruvyl group from chorismate, with concomitant aromatization of the ring, to provide 4-hydroxybenzoate (4HB) for the ubiquinone pathway. This chain is Probable chorismate pyruvate-lyase, found in Shewanella sp. (strain W3-18-1).